The sequence spans 1592 residues: ABC transporter ATP-binding protein/permease VMR1 (1592 aa).

Topologically, residues 1–33 are vacuolar; the sequence is MGTDPLIIRNNGSFWEVDDFTRLGRTQLLSYYL. Asn11 carries an N-linked (GlcNAc...) asparagine glycan. The chain crosses the membrane as a helical span at residues 34 to 54; it reads PLAIIASIGIFALCRSGLSRY. Over 55 to 74 the chain is Cytoplasmic; it reads VRSAECDLVNEYLFGAQEER. The helical transmembrane segment at 75 to 95 threads the bilayer; the sequence is KEDNSIERLLRNSNTQANYVN. At 96 to 100 the chain is on the vacuolar side; it reads VKKQG. The chain crosses the membrane as a helical span at residues 101–121; sequence RILKLRHFDITTIDVKQIDAK. The Cytoplasmic segment spans residues 122–131; that stretch reads NHGGLTFSRP. Residues 132 to 152 form a helical membrane-spanning segment; sequence STSDHLRKSSEIVLMSLQIIG. Over 153–170 the chain is Vacuolar; sequence LSFLRVTKINIELTNRDV. A helical membrane pass occupies residues 171 to 191; that stretch reads TTLLLFWLILLSLSILRVYKR. The Cytoplasmic portion of the chain corresponds to 192-329; it reads STNLWAICFT…NKHINNLTLA (138 aa). The chain crosses the membrane as a helical span at residues 330-350; that stretch reads LFESFKTYLLIGMLWVLVNSI. In terms of domain architecture, ABC transmembrane type-1 1 spans 338–632; it reads LLIGMLWVLV…LSNMLSFINQ (295 aa). The Vacuolar segment spans residues 351–379; the sequence is VNLLPTILMKRFLEIVDNPNRSSSCMNLA. N-linked (GlcNAc...) asparagine glycosylation occurs at Asn370. Residues 380–400 traverse the membrane as a helical segment; that stretch reads WLYIIGMFICRLTLAICNSQG. Topologically, residues 401–465 are cytoplasmic; it reads QFVSDKICLR…SFKVSELANY (65 aa). Residues 466–486 form a helical membrane-spanning segment; sequence LYVTVQAVIMIIVVVGLLFNF. Topologically, residues 487–489 are vacuolar; the sequence is LGV. Residues 490-510 form a helical membrane-spanning segment; the sequence is SAFAGISIILVMFPLNFLLAN. Residues 511-572 are Cytoplasmic-facing; that stretch reads LLGKFQKQTL…SLLKKSLVWS (62 aa). Residues 573 to 593 traverse the membrane as a helical segment; that stretch reads VTSFLWFVTPTLVTGVTFAIC. At 594-614 the chain is on the vacuolar side; the sequence is TFVQHEDLNAPLAFTTLSLFT. Residues 615–635 form a helical membrane-spanning segment; sequence LLKTPLDQLSNMLSFINQSKV. The Cytoplasmic portion of the chain corresponds to 636–989; the sequence is SLKRISDFLR…ALTALFALYI (354 aa). One can recognise an ABC transporter 1 domain in the interval 664 to 908; that stretch reads IEFKNATLTW…GLFKEKYVQL (245 aa). An ATP-binding site is contributed by 702 to 709; that stretch reads GSTGSGKS. In terms of domain architecture, ABC transmembrane type-1 2 spans 981 to 1282; the sequence is LTALFALYIT…LVRLYSTFEM (302 aa). The helical transmembrane segment at 990–1010 threads the bilayer; sequence TAQILFISQSWWIRHWVNDTN. Over 1011–1051 the chain is Vacuolar; sequence VRINAPGFAMDTLPLKGMTDSSKNKHNAFYYLTVYFLIGII. The helical transmembrane segment at 1052-1072 threads the bilayer; sequence QAMLGGFKTMMTFLSGMRASR. The Cytoplasmic portion of the chain corresponds to 1073–1115; it reads KIFNNLLDLVLHAQIRFFDVTPVGRIMNRFSKDIEGVDQELIP. Residues 1116-1136 form a helical membrane-spanning segment; that stretch reads YLEVTIFCLIQCASIIFLITV. Position 1137 (Ile1137) is a topological domain, vacuolar. A helical membrane pass occupies residues 1138–1158; the sequence is TPRFLTVAVIVFVLYFFVGKW. The Cytoplasmic segment spans residues 1159–1229; the sequence is YLTASRELKR…VTVKWFSFRV (71 aa). The chain crosses the membrane as a helical span at residues 1230–1250; that stretch reads DMIGAFIVLASGSFILLNIAN. Residues 1251-1252 are Vacuolar-facing; that stretch reads ID. The helical transmembrane segment at 1253–1273 threads the bilayer; it reads SGLAGISLTYAILFTDGALWL. Over 1274–1592 the chain is Cytoplasmic; it reads VRLYSTFEMN…IAKQSSKMMK (319 aa). Positions 1323–1572 constitute an ABC transporter 2 domain; sequence IEIENLSLRY…ERGIFYSMCR (250 aa). 1357-1364 lines the ATP pocket; sequence GRTGAGKS.

This sequence belongs to the ABC transporter superfamily. In terms of assembly, ABC transporter which may be involved in multidrug resistance.

It is found in the vacuole membrane. This is ABC transporter ATP-binding protein/permease VMR1 (VMR1) from Saccharomyces cerevisiae (strain ATCC 204508 / S288c) (Baker's yeast).